Here is a 202-residue protein sequence, read N- to C-terminus: MRNFVIIAHKALTTGDFSLNDLPGSAGRMDILCRCINSCLFLSHDLRRDVQVHLLLLGEPEPGKIIRFDSEHVRYLNPDERSAGSLIKKALQKTAGEYEVRSTPGVFIRSGNLGTLLNEFKDAGRRLIYLHEDGEDIRELSDLTNNAVFILGDHMGVTEEEEQLIKEHEAKTISLGPIPLHADHCIILINNEIDRNLSGKSQ.

Positions 130, 152, and 185 each coordinate S-adenosyl-L-methionine.

Belongs to the methyltransferase superfamily. TrmY family. As to quaternary structure, homodimer.

It localises to the cytoplasm. It catalyses the reaction pseudouridine(54) in tRNA + S-adenosyl-L-methionine = N(1)-methylpseudouridine(54) in tRNA + S-adenosyl-L-homocysteine + H(+). Functionally, specifically catalyzes the N1-methylation of pseudouridine at position 54 (Psi54) in tRNAs. The chain is tRNA (pseudouridine(54)-N(1))-methyltransferase from Methanococcoides burtonii (strain DSM 6242 / NBRC 107633 / OCM 468 / ACE-M).